The chain runs to 80 residues: UPF0154 protein SH1564 (80 aa).

Residues 4 to 24 (WLAILLIIVALIGGLVGGFFL) form a helical membrane-spanning segment.

This sequence belongs to the UPF0154 family.

The protein resides in the membrane. The protein is UPF0154 protein SH1564 of Staphylococcus haemolyticus (strain JCSC1435).